A 197-amino-acid polypeptide reads, in one-letter code: Large ribosomal subunit protein uL22 (197 aa).

A disordered region spans residues 118–197 (ESRPAKDQRS…ETSAAKGGSD (80 aa)). Over residues 149-165 (APAKKAAAKAPAKKAPA) the composition is skewed to low complexity. Residues 172–183 (TPAKKAPAKKAP) show a composition bias toward basic residues. Positions 184 to 197 (AKASETSAAKGGSD) are enriched in low complexity.

Belongs to the universal ribosomal protein uL22 family. Part of the 50S ribosomal subunit.

Its function is as follows. This protein binds specifically to 23S rRNA; its binding is stimulated by other ribosomal proteins, e.g. L4, L17, and L20. It is important during the early stages of 50S assembly. It makes multiple contacts with different domains of the 23S rRNA in the assembled 50S subunit and ribosome. Functionally, the globular domain of the protein is located near the polypeptide exit tunnel on the outside of the subunit, while an extended beta-hairpin is found that lines the wall of the exit tunnel in the center of the 70S ribosome. The protein is Large ribosomal subunit protein uL22 of Mycobacterium bovis (strain ATCC BAA-935 / AF2122/97).